A 361-amino-acid chain; its full sequence is tRNA-specific 2-thiouridylase MnmA (361 aa).

ATP-binding positions include 6 to 13 and I32; that span reads LVSGGVDS. The interval 93 to 95 is interaction with target base in tRNA; sequence NPD. C98 acts as the Nucleophile in catalysis. The cysteines at positions 98 and 193 are disulfide-linked. Residue G121 coordinates ATP. Residues 143 to 145 are interaction with tRNA; the sequence is KDQ. Catalysis depends on C193, which acts as the Cysteine persulfide intermediate.

Belongs to the MnmA/TRMU family.

The protein localises to the cytoplasm. The enzyme catalyses S-sulfanyl-L-cysteinyl-[protein] + uridine(34) in tRNA + AH2 + ATP = 2-thiouridine(34) in tRNA + L-cysteinyl-[protein] + A + AMP + diphosphate + H(+). In terms of biological role, catalyzes the 2-thiolation of uridine at the wobble position (U34) of tRNA, leading to the formation of s(2)U34. This chain is tRNA-specific 2-thiouridylase MnmA, found in Porphyromonas gingivalis (strain ATCC BAA-308 / W83).